Here is a 796-residue protein sequence, read N- to C-terminus: Protein translocase subunit SecA 2 (796 aa).

ATP-binding positions include glutamine 84, 102 to 106, and aspartate 496; that span reads GEGKT.

Belongs to the SecA family. As to quaternary structure, monomer and homodimer. Part of the essential Sec protein translocation apparatus which comprises SecA, SecYEG and auxiliary proteins SecDF. Other proteins may also be involved.

It is found in the cell membrane. It localises to the cytoplasm. It catalyses the reaction ATP + H2O + cellular proteinSide 1 = ADP + phosphate + cellular proteinSide 2.. Part of the Sec protein translocase complex. Interacts with the SecYEG preprotein conducting channel. Has a central role in coupling the hydrolysis of ATP to the transfer of proteins into and across the cell membrane, serving as an ATP-driven molecular motor driving the stepwise translocation of polypeptide chains across the membrane. The protein is Protein translocase subunit SecA 2 of Staphylococcus aureus (strain MRSA252).